Here is a 232-residue protein sequence, read N- to C-terminus: Chaperone protein LpfB (232 aa).

Positions 1 to 23 (MNRSRLISCTALVLALIAQNSFA) are cleaved as a signal peptide.

The protein belongs to the periplasmic pilus chaperone family.

The protein localises to the periplasm. In terms of biological role, required for the biogenesis of long polar fimbria; binds and interact with LpfA. This chain is Chaperone protein LpfB (lpfB), found in Salmonella typhimurium (strain LT2 / SGSC1412 / ATCC 700720).